The primary structure comprises 202 residues: GTP cyclohydrolase-2 (202 aa).

Arg-49–Glu-53 is a binding site for GTP. The Zn(2+) site is built by Cys-54, Cys-65, and Cys-67. GTP contacts are provided by residues Gln-70, Glu-92 to Arg-94, and Thr-114. Asp-126 functions as the Proton acceptor in the catalytic mechanism. Arg-128 (nucleophile) is an active-site residue. Residues Thr-149 and Lys-154 each contribute to the GTP site.

This sequence belongs to the GTP cyclohydrolase II family. Zn(2+) is required as a cofactor.

The catalysed reaction is GTP + 4 H2O = 2,5-diamino-6-hydroxy-4-(5-phosphoribosylamino)-pyrimidine + formate + 2 phosphate + 3 H(+). Its pathway is cofactor biosynthesis; riboflavin biosynthesis; 5-amino-6-(D-ribitylamino)uracil from GTP: step 1/4. In terms of biological role, catalyzes the conversion of GTP to 2,5-diamino-6-ribosylamino-4(3H)-pyrimidinone 5'-phosphate (DARP), formate and pyrophosphate. This chain is GTP cyclohydrolase-2, found in Shewanella frigidimarina (strain NCIMB 400).